A 110-amino-acid polypeptide reads, in one-letter code: UPF0339 protein PA0329 (110 aa).

2 repeat units span residues 10–58 (AKDG…AFEV) and 61–109 (ANNG…LSDE). Residues 91–110 (EAGVQSVKRATPEAGLSDES) are disordered.

It belongs to the UPF0339 family. Duplicated subfamily.

The polypeptide is UPF0339 protein PA0329 (Pseudomonas aeruginosa (strain ATCC 15692 / DSM 22644 / CIP 104116 / JCM 14847 / LMG 12228 / 1C / PRS 101 / PAO1)).